The following is a 423-amino-acid chain: UDP-N-acetylglucosamine 1-carboxyvinyltransferase 1 (423 aa).

23 to 24 (KN) is a phosphoenolpyruvate binding site. Arginine 96 provides a ligand contact to UDP-N-acetyl-alpha-D-glucosamine. Catalysis depends on cysteine 120, which acts as the Proton donor. Cysteine 120 is subject to 2-(S-cysteinyl)pyruvic acid O-phosphothioketal. Residues 125 to 129 (RPIDL), aspartate 309, and valine 331 each bind UDP-N-acetyl-alpha-D-glucosamine.

This sequence belongs to the EPSP synthase family. MurA subfamily.

It localises to the cytoplasm. The catalysed reaction is phosphoenolpyruvate + UDP-N-acetyl-alpha-D-glucosamine = UDP-N-acetyl-3-O-(1-carboxyvinyl)-alpha-D-glucosamine + phosphate. It functions in the pathway cell wall biogenesis; peptidoglycan biosynthesis. In terms of biological role, cell wall formation. Adds enolpyruvyl to UDP-N-acetylglucosamine. This chain is UDP-N-acetylglucosamine 1-carboxyvinyltransferase 1, found in Streptococcus thermophilus (strain ATCC BAA-250 / LMG 18311).